The following is a 143-amino-acid chain: Probable cyclic pyranopterin monophosphate synthase (143 aa).

Substrate-binding positions include 61 to 63 (MCH) and 97 to 98 (ME). Residue Asp112 is part of the active site.

It belongs to the MoaC family. Homohexamer; trimer of dimers.

The enzyme catalyses (8S)-3',8-cyclo-7,8-dihydroguanosine 5'-triphosphate = cyclic pyranopterin phosphate + diphosphate. It functions in the pathway cofactor biosynthesis; molybdopterin biosynthesis. Its function is as follows. Catalyzes the conversion of (8S)-3',8-cyclo-7,8-dihydroguanosine 5'-triphosphate to cyclic pyranopterin monophosphate (cPMP). This Sulfolobus acidocaldarius (strain ATCC 33909 / DSM 639 / JCM 8929 / NBRC 15157 / NCIMB 11770) protein is Probable cyclic pyranopterin monophosphate synthase.